A 352-amino-acid polypeptide reads, in one-letter code: Molybdenum import ATP-binding protein ModC (352 aa).

The ABC transporter domain occupies 1-229 (MLELNFSQTL…SVMNPWLPKE (229 aa)). An ATP-binding site is contributed by 31–38 (GVSGAGKT). Residues 289–352 (QTSIRNVLRA…AQIKSVSITA (64 aa)) enclose the Mop domain.

The protein belongs to the ABC transporter superfamily. Molybdate importer (TC 3.A.1.8) family. The complex is composed of two ATP-binding proteins (ModC), two transmembrane proteins (ModB) and a solute-binding protein (ModA).

The protein resides in the cell inner membrane. The catalysed reaction is molybdate(out) + ATP + H2O = molybdate(in) + ADP + phosphate + H(+). Functionally, part of the ABC transporter complex ModABC involved in molybdenum import. Responsible for energy coupling to the transport system. The protein is Molybdenum import ATP-binding protein ModC of Escherichia coli O6:H1 (strain CFT073 / ATCC 700928 / UPEC).